Here is a 423-residue protein sequence, read N- to C-terminus: MIKLDIKDAKKFLKTNVFSLQDQVNELHDVIQNKSGLGNDFLGWLDLPLTYDKEELDRIYKLKEQHKNVDAIVVIGIGGSYLGAKAGYEFLKTPFKKQKPELIFAGHHLSANYLKHLLKYLNKKNYVINVISKSGTTTEPAVAFRLLKAHIENKYGVKEARKRIFATTDKARGSLYQLAINEGYERFVIEDNVGGRFSVLSAVGLLPFVFVGIDVEKMIKGAQDAYHDAQDPSLKKNKAYLYAVTRFLLNQSGKDVEYLINYEPRLAFFAEWWKQLFGESEGKGGKGLLVHSASFTTDLHSLGQQIQDGNRIIFETVLNVKKTDKLSIPFVEEDLDKLNYIAGKEISYVNEQAFLGTKEAHIDGGVPNIVITIDKMDAYHFGYLVYFFEIACAMSAYLLEVNPFDQPGVEAYKKNMFRLLGKK.

Catalysis depends on Glu-279, which acts as the Proton donor. Residues His-300 and Lys-413 contribute to the active site.

It belongs to the GPI family.

It is found in the cytoplasm. The enzyme catalyses alpha-D-glucose 6-phosphate = beta-D-fructose 6-phosphate. It functions in the pathway carbohydrate biosynthesis; gluconeogenesis. The protein operates within carbohydrate degradation; glycolysis; D-glyceraldehyde 3-phosphate and glycerone phosphate from D-glucose: step 2/4. Catalyzes the reversible isomerization of glucose-6-phosphate to fructose-6-phosphate. The protein is Glucose-6-phosphate isomerase of Acholeplasma laidlawii (strain PG-8A).